Here is a 492-residue protein sequence, read N- to C-terminus: Probable cobyric acid synthase (492 aa).

Residues 252–444 (PIEVNVVKFS…FHGILENFEF (193 aa)) enclose the GATase cobBQ-type domain. Cys-330 (nucleophile) is an active-site residue. His-436 is a catalytic residue.

It belongs to the CobB/CobQ family. CobQ subfamily.

It functions in the pathway cofactor biosynthesis; adenosylcobalamin biosynthesis. In terms of biological role, catalyzes amidations at positions B, D, E, and G on adenosylcobyrinic A,C-diamide. NH(2) groups are provided by glutamine, and one molecule of ATP is hydrogenolyzed for each amidation. In Methanococcus maripaludis (strain DSM 14266 / JCM 13030 / NBRC 101832 / S2 / LL), this protein is Probable cobyric acid synthase.